A 456-amino-acid polypeptide reads, in one-letter code: Phosphoglucomutase/phosphomannomutase (456 aa).

Residue Ser-101 is the Phosphoserine intermediate of the active site. Mg(2+) is bound by residues Ser-101, Asp-243, Asp-245, and Asp-247. Position 101 is a phosphoserine; by autocatalysis (Ser-101).

The protein belongs to the phosphohexose mutase family. Homotetramer. The cofactor is Mg(2+). In terms of processing, activated by phosphorylation.

The enzyme catalyses alpha-D-glucose 1-phosphate = alpha-D-glucose 6-phosphate. It catalyses the reaction alpha-D-mannose 1-phosphate = D-mannose 6-phosphate. In terms of biological role, catalyzes the interconversion of glucose 1-phosphate and glucose 6-phosphate, and the interconversion of mannose 1-phosphate and mannose 6-phosphate. Also displays low activity with deoxyribose 1-phosphate and glucosamine 1-phosphate. The chain is Phosphoglucomutase/phosphomannomutase from Thermococcus kodakarensis (strain ATCC BAA-918 / JCM 12380 / KOD1) (Pyrococcus kodakaraensis (strain KOD1)).